We begin with the raw amino-acid sequence, 361 residues long: Phosphoserine aminotransferase (361 aa).

Arg43 lines the L-glutamate pocket. Pyridoxal 5'-phosphate contacts are provided by residues 77 to 78, Trp103, Thr153, Asp173, and Gln196; that span reads AS. Lys197 carries the N6-(pyridoxal phosphate)lysine modification. 238–239 is a binding site for pyridoxal 5'-phosphate; that stretch reads NT.

This sequence belongs to the class-V pyridoxal-phosphate-dependent aminotransferase family. SerC subfamily. Homodimer. Pyridoxal 5'-phosphate is required as a cofactor.

It is found in the cytoplasm. It carries out the reaction O-phospho-L-serine + 2-oxoglutarate = 3-phosphooxypyruvate + L-glutamate. The enzyme catalyses 4-(phosphooxy)-L-threonine + 2-oxoglutarate = (R)-3-hydroxy-2-oxo-4-phosphooxybutanoate + L-glutamate. It functions in the pathway amino-acid biosynthesis; L-serine biosynthesis; L-serine from 3-phospho-D-glycerate: step 2/3. It participates in cofactor biosynthesis; pyridoxine 5'-phosphate biosynthesis; pyridoxine 5'-phosphate from D-erythrose 4-phosphate: step 3/5. Its function is as follows. Catalyzes the reversible conversion of 3-phosphohydroxypyruvate to phosphoserine and of 3-hydroxy-2-oxo-4-phosphonooxybutanoate to phosphohydroxythreonine. The chain is Phosphoserine aminotransferase from Pseudomonas entomophila (strain L48).